Reading from the N-terminus, the 273-residue chain is Putative phosphoenolpyruvate synthase regulatory protein (273 aa).

153 to 160 (AVSRAGKT) serves as a coordination point for ADP.

Belongs to the pyruvate, phosphate/water dikinase regulatory protein family. PSRP subfamily.

The catalysed reaction is [pyruvate, water dikinase] + ADP = [pyruvate, water dikinase]-phosphate + AMP + H(+). It catalyses the reaction [pyruvate, water dikinase]-phosphate + phosphate + H(+) = [pyruvate, water dikinase] + diphosphate. Functionally, bifunctional serine/threonine kinase and phosphorylase involved in the regulation of the phosphoenolpyruvate synthase (PEPS) by catalyzing its phosphorylation/dephosphorylation. The chain is Putative phosphoenolpyruvate synthase regulatory protein from Xanthomonas campestris pv. campestris (strain ATCC 33913 / DSM 3586 / NCPPB 528 / LMG 568 / P 25).